Consider the following 49-residue polypeptide: Large ribosomal subunit protein bL33B (49 aa).

The protein belongs to the bacterial ribosomal protein bL33 family.

In Staphylococcus epidermidis (strain ATCC 12228 / FDA PCI 1200), this protein is Large ribosomal subunit protein bL33B (rpmG2).